Reading from the N-terminus, the 432-residue chain is Probable rhamnogalacturonase E (432 aa).

The first 21 residues, 1-21, serve as a signal peptide directing secretion; sequence MQSKTFSVLSSCLLLIATVQG. An intrachain disulfide couples Cys-42 to Cys-68. N-linked (GlcNAc...) asparagine glycans are attached at residues Asn-53, Asn-91, and Asn-106. Catalysis depends on Asp-221, which acts as the Proton donor. Residues Cys-223 and Cys-240 are joined by a disulfide bond. Residues Asn-241 and Asn-256 are each glycosylated (N-linked (GlcNAc...) asparagine). His-296 is a catalytic residue. 2 disulfide bridges follow: Cys-329-Cys-335 and Cys-357-Cys-366.

This sequence belongs to the glycosyl hydrolase 28 family.

It localises to the secreted. Its function is as follows. Pectinolytic enzymes consist of four classes of enzymes: pectine lyase, polygalacturonase, pectin methylesterase and rhamnogalacturonase. Hydrolyzes alpha-D-galacturonopyranosyl-(1,2)-alpha-L-rhamnopyranosyl linkages in the backbone of the hairy regions of pectins. In Aspergillus oryzae (strain ATCC 42149 / RIB 40) (Yellow koji mold), this protein is Probable rhamnogalacturonase E (rhgE).